A 188-amino-acid polypeptide reads, in one-letter code: CASP-like protein 4B1 (188 aa).

Positions 1 to 11 are enriched in basic and acidic residues; sequence MTNPDKQKPVE. The segment at 1–34 is disordered; that stretch reads MTNPDKQKPVEVTDVETAAEKTSEPTPASGTSTI. At 1–46 the chain is on the cytoplasmic side; it reads MTNPDKQKPVEVTDVETAAEKTSEPTPASGTSTITQRWKREDLIKK. Residues 24–34 show a composition bias toward polar residues; that stretch reads EPTPASGTSTI. A helical transmembrane segment spans residues 47–67; that stretch reads ASPITRGICLLFSLLAFLIMV. Residues 68-84 lie on the Extracellular side of the membrane; that stretch reads SNKHGYGRNFNEYEEYR. A helical membrane pass occupies residues 85–105; that stretch reads YVLAISIISTLYTAWQTFAHF. The Cytoplasmic segment spans residues 106–120; it reads SKREFFDRRTSTLVD. A helical membrane pass occupies residues 121–141; sequence FSGDQIVAYLLISAASSAIPL. The Extracellular segment spans residues 142–156; sequence TNRFREGQDNIFTDS. The helical transmembrane segment at 157-177 threads the bilayer; the sequence is AASAISMAIFAFVALALSALF. At 178–188 the chain is on the cytoplasmic side; the sequence is SGYKLSTHSFI.

This sequence belongs to the Casparian strip membrane proteins (CASP) family. In terms of assembly, homodimer and heterodimers.

Its subcellular location is the cell membrane. The sequence is that of CASP-like protein 4B1 from Arabidopsis lyrata subsp. lyrata (Lyre-leaved rock-cress).